Here is a 64-residue protein sequence, read N- to C-terminus: Prokaryotic ubiquitin-like protein Pup (64 aa).

Over residues 1-11 the composition is skewed to basic and acidic residues; it reads MAQEQTKRTGG. The segment at 1–38 is disordered; that stretch reads MAQEQTKRTGGGDEDDTPGGDGAAGQERREKLAEDTDD. Positions 21–58 are ARC ATPase binding; that stretch reads DGAAGQERREKLAEDTDDLLDEIDDVLEENAEDFVRAY. Residues 24 to 52 are a coiled coil; that stretch reads AGQERREKLAEDTDDLLDEIDDVLEENAE. Position 64 is a deamidated glutamine (Gln-64). An Isoglutamyl lysine isopeptide (Gln-Lys) (interchain with K-? in acceptor proteins) cross-link involves residue Gln-64.

The protein belongs to the prokaryotic ubiquitin-like protein family. Strongly interacts with the proteasome-associated ATPase ARC through a hydrophobic interface; the interacting region of Pup lies in its C-terminal half. There is one Pup binding site per ARC hexamer ring. In terms of processing, is modified by deamidation of its C-terminal glutamine to glutamate by the deamidase Dop, a prerequisite to the subsequent pupylation process.

Its pathway is protein degradation; proteasomal Pup-dependent pathway. Protein modifier that is covalently attached to lysine residues of substrate proteins, thereby targeting them for proteasomal degradation. The tagging system is termed pupylation. This chain is Prokaryotic ubiquitin-like protein Pup, found in Rhodococcus opacus (strain B4).